Consider the following 35-residue polypeptide: Photosystem II reaction center protein T (35 aa).

The chain crosses the membrane as a helical span at residues 3–23 (ALVYTFLLVSTLGIIFFAIFF).

It belongs to the PsbT family. PSII is composed of 1 copy each of membrane proteins PsbA, PsbB, PsbC, PsbD, PsbE, PsbF, PsbH, PsbI, PsbJ, PsbK, PsbL, PsbM, PsbT, PsbY, PsbZ, Psb30/Ycf12, at least 3 peripheral proteins of the oxygen-evolving complex and a large number of cofactors. It forms dimeric complexes.

It is found in the plastid. Its subcellular location is the chloroplast thylakoid membrane. Functionally, found at the monomer-monomer interface of the photosystem II (PS II) dimer, plays a role in assembly and dimerization of PSII. PSII is a light-driven water plastoquinone oxidoreductase, using light energy to abstract electrons from H(2)O, generating a proton gradient subsequently used for ATP formation. This Suaeda aralocaspica (Seablite) protein is Photosystem II reaction center protein T.